We begin with the raw amino-acid sequence, 75 residues long: MSAYFRRKKMCRFSAEGGNEIDYKDINLLKNYITETGKIVPSRITGTQTRFQRQLAKAIKHARFIGLLPYCDSHR.

Belongs to the bacterial ribosomal protein bS18 family. Part of the 30S ribosomal subunit. Forms a tight heterodimer with protein bS6.

Its function is as follows. Binds as a heterodimer with protein bS6 to the central domain of the 16S rRNA, where it helps stabilize the platform of the 30S subunit. The chain is Small ribosomal subunit protein bS18 from Legionella pneumophila (strain Paris).